Reading from the N-terminus, the 281-residue chain is uncharacterized protein (281 aa).

This is an uncharacterized protein from Mycoplasma genitalium (strain ATCC 33530 / DSM 19775 / NCTC 10195 / G37) (Mycoplasmoides genitalium).